A 484-amino-acid polypeptide reads, in one-letter code: Cathepsin F (484 aa).

The signal sequence occupies residues 1–19 (MAPWLQLLSLLGLLPGAVA). Residues 20 to 270 (APAQPRAASF…MKQAKSVGDL (251 aa)) constitute a propeptide, activation peptide. Residues Asn160 and Asn195 are each glycosylated (N-linked (GlcNAc...) asparagine). 2 disulfide bridges follow: Cys292–Cys333 and Cys326–Cys366. Residue Cys295 is part of the active site. Asn367 and Asn378 each carry an N-linked (GlcNAc...) asparagine glycan. A disulfide bridge connects residues Cys424 and Cys472. His431 is a catalytic residue. Residue Asn440 is glycosylated (N-linked (GlcNAc...) asparagine). Residue Asn451 is part of the active site.

The protein belongs to the peptidase C1 family. In terms of tissue distribution, high expression levels in heart, skeletal muscle, brain, testis and ovary; moderate levels in prostate, placenta, liver and colon; and no detectable expression in peripheral leukocytes and thymus.

The protein localises to the lysosome. It catalyses the reaction The recombinant enzyme cleaves synthetic substrates with Phe and Leu (better than Val) in P2, with high specificity constant (kcat/Km) comparable to that of cathepsin L.. In terms of biological role, thiol protease which is believed to participate in intracellular degradation and turnover of proteins. Has also been implicated in tumor invasion and metastasis. The polypeptide is Cathepsin F (CTSF) (Homo sapiens (Human)).